Consider the following 235-residue polypeptide: Orotidine 5'-phosphate decarboxylase (235 aa).

Residues Asp12, Lys34, Asp61–Thr70, Thr116, Arg177, Gln186, and Arg207 each bind substrate. Lys63 serves as the catalytic Proton donor.

This sequence belongs to the OMP decarboxylase family. Type 1 subfamily. In terms of assembly, homodimer.

It carries out the reaction orotidine 5'-phosphate + H(+) = UMP + CO2. It participates in pyrimidine metabolism; UMP biosynthesis via de novo pathway; UMP from orotate: step 2/2. Functionally, catalyzes the decarboxylation of orotidine 5'-monophosphate (OMP) to uridine 5'-monophosphate (UMP). The chain is Orotidine 5'-phosphate decarboxylase from Rhizobium leguminosarum bv. trifolii (strain WSM2304).